A 473-amino-acid chain; its full sequence is UDP-N-acetylmuramoylalanine--D-glutamate ligase (473 aa).

120 to 126 (GSNGKTT) contributes to the ATP binding site.

Belongs to the MurCDEF family.

It is found in the cytoplasm. The enzyme catalyses UDP-N-acetyl-alpha-D-muramoyl-L-alanine + D-glutamate + ATP = UDP-N-acetyl-alpha-D-muramoyl-L-alanyl-D-glutamate + ADP + phosphate + H(+). Its pathway is cell wall biogenesis; peptidoglycan biosynthesis. Functionally, cell wall formation. Catalyzes the addition of glutamate to the nucleotide precursor UDP-N-acetylmuramoyl-L-alanine (UMA). This is UDP-N-acetylmuramoylalanine--D-glutamate ligase from Nitrosospira multiformis (strain ATCC 25196 / NCIMB 11849 / C 71).